Here is a 1005-residue protein sequence, read N- to C-terminus: Helicase-like transcription factor (1005 aa).

At arginine 27 the chain carries Omega-N-methylarginine. A DNA-binding region spans residues 38–287; the sequence is EFQDIIPPDD…FSEKDQPENV (250 aa). Lysine 112 is covalently cross-linked (Glycyl lysine isopeptide (Lys-Gly) (interchain with G-Cter in SUMO2)). Tyrosine 195 bears the Phosphotyrosine; by JAK2 mark. A Glycyl lysine isopeptide (Lys-Gly) (interchain with G-Cter in SUMO2) cross-link involves residue lysine 211. Position 294-301 (294-301) interacts with ATP; sequence DDMGLGKT. Residues 325 to 361 show a composition bias toward basic and acidic residues; it reads KNQVKKECNSSESDKPGRKDTIKKTDGLSKEGSRYSE. The segment at 325-385 is disordered; it reads KNQVKKECNS…SELSSSQPKR (61 aa). Residues 373–382 show a composition bias toward polar residues; that stretch reads YSMSELSSSQ. Phosphoserine is present on residues serine 395, serine 396, and serine 398. A Helicase ATP-binding domain is found at 427–603; sequence GPSKIKEDTA…WSLLSFLKLK (177 aa). The DEGH box signature appears at 554–557; it reads DEGH. A Phosphothreonine modification is found at threonine 733. An RING-type zinc finger spans residues 757–798; that stretch reads CAICLDSLTVPVITHCAHVFCKPCICQCIQNEQPHAKCPLCR. Required for interaction with the RFBP isoform of ATP11B stretches follow at residues 767 to 772 and 791 to 796; these read PVITHC and HAKCPL. The region spanning 834–999 is the Helicase C-terminal domain; sequence ALMHALIDLR…EMKQAKINEI (166 aa). The interaction with SP1 and SP3 stretch occupies residues 922–1005; it reads SRVFLMDPAW…INEIRTLIDL (84 aa).

This sequence belongs to the SNF2/RAD54 helicase family. RAD16 subfamily. As to quaternary structure, interacts with SP1 and SP3 independently of DNA; the interaction with these transcriptional factors may be required for basal transcription of target genes. Interacts (via the RING-finger) with isoform RFBP of ATP11B. Progesterone-dependent isoform 1 interacts with EGR1; the interaction requires prior binding to DNA and represses c-Rel via a DNA looping mechanism. Interacts with GATA4. Interacts with PCNA; the interaction promotes polyubiquitination of PCNA through association with the UBE2B-RAD18 and UBE2V2-UBE2N ubiquitin ligase complexes. Interacts with RAD18, SHPRH, UBE2V2 and UBE2N. Phosphorylated on serine, threonine, and tyrosine residues. Tyr-195 phosphorylation is catalyzed by JAK2 in response to prolactin treatment. It is required for DNA binding. As to expression, isoform 1 is expressed preferentially in bladder, cervix, diaphragm, duodenum, epididymis, heart, kidney, liver, lung, ovary (granulosa cells), prostate, spleen, testis (predominantly in the Sertoli cells of the seminiferous tubules) and vagina. Isoform 2 is expressed preferentially in lactating mammary gland and uterine endometrium.

Its subcellular location is the cytoplasm. It localises to the nucleus. It is found in the nucleolus. The protein resides in the nucleoplasm. The enzyme catalyses S-ubiquitinyl-[E2 ubiquitin-conjugating enzyme]-L-cysteine + [acceptor protein]-L-lysine = [E2 ubiquitin-conjugating enzyme]-L-cysteine + N(6)-ubiquitinyl-[acceptor protein]-L-lysine.. It participates in protein modification; protein ubiquitination. In terms of biological role, has both helicase and E3 ubiquitin ligase activities. Possesses intrinsic ATP-dependent nucleosome-remodeling activity. This activity may be required for transcriptional activation or repression of specific target promoters. These may include the SERPINE1, to which this protein can bind directly. Mediates repression by c-Rel through a DNA-looping mechanism. Plays a role in error-free postreplication repair (PRR) of damaged DNA and maintains genomic stability through acting as a ubiquitin ligase for 'Lys-63'-linked polyubiquitination of chromatin-bound PCNA. Transcriptional regulator that mediates the ability of prolactin to augment progesterone-dependent transcription of the SCGB1A1/uteroglobin gene through a bipartite progesterone receptor half-site/overlapping Y-box combination (-38/-26) where progesterone activation is attenuated by nuclear factor Y binding. Regulation also involves two GC-rich sequences in the proximal promoter (positions -162/+90) and a RUSH/SMARCA3 site (positions -616/-611) in the 5'-untranslated region. The polypeptide is Helicase-like transcription factor (HLTF) (Oryctolagus cuniculus (Rabbit)).